A 132-amino-acid polypeptide reads, in one-letter code: Small ribosomal subunit protein uS15 (132 aa).

It belongs to the universal ribosomal protein uS15 family. In terms of assembly, part of the 30S ribosomal subunit.

In Methanobrevibacter smithii (strain ATCC 35061 / DSM 861 / OCM 144 / PS), this protein is Small ribosomal subunit protein uS15.